A 273-amino-acid polypeptide reads, in one-letter code: Urease accessory protein UreD (273 aa).

It belongs to the UreD family. As to quaternary structure, ureD, UreF and UreG form a complex that acts as a GTP-hydrolysis-dependent molecular chaperone, activating the urease apoprotein by helping to assemble the nickel containing metallocenter of UreC. The UreE protein probably delivers the nickel.

The protein resides in the cytoplasm. Required for maturation of urease via the functional incorporation of the urease nickel metallocenter. This Rhizobium etli (strain ATCC 51251 / DSM 11541 / JCM 21823 / NBRC 15573 / CFN 42) protein is Urease accessory protein UreD.